The chain runs to 280 residues: Chlorophyll a-b binding protein CP29 (280 aa).

Positions 1 to 42 (MVFKFPTPPGTQKKAGTTATKPAPKATTKKVATSTGTRSGGV) are disordered. At Val2 the chain carries N-acetylvaline. Thr7 bears the Phosphothreonine; in State 1 and State 2 mark. A compositionally biased stretch (low complexity) spans 10-37 (GTQKKAGTTATKPAPKATTKKVATSTGT). The residue at position 17 (Thr17) is a Phosphothreonine; in State 2. Phosphothreonine; in State 1 and State 2 is present on Thr33. Tyr47 is a chlorophyll b binding site. 2 residues coordinate chlorophyll a: Phe73 and Ser79. Ser103 is modified (phosphoserine; in State 2). Residues Glu137 and His140 each coordinate chlorophyll a. 2 helical membrane-spanning segments follow: residues 143-163 (WAML…VSWV) and 176-196 (AGLS…ILVG). Chlorophyll b is bound by residues Ser183, Glu199, and Arg202. 4 residues coordinate chlorophyll a: Glu238, His241, Arg243, and Gln255. Residues 244-264 (LAMVSFFGYGVQALSTGEGAL) form a helical membrane-spanning segment.

The protein belongs to the light-harvesting chlorophyll a/b-binding (LHC) protein family. The LHC complex consists of chlorophyll a-b binding proteins. Binds at least 14 chlorophylls (8 Chl-a and 6 Chl-b) and carotenoids such as lutein and neoxanthin. serves as cofactor. Post-translationally, reversible phosphorylation plays a role in the State transition process and determines the affinity of LHCII for PSI and PSII.

The protein resides in the plastid. It is found in the chloroplast thylakoid membrane. The light-harvesting complex (LHC) functions as a light receptor, it captures and delivers excitation energy to photosystems with which it is closely associated. CP29 facilitates the State 1 to State 2 transition, where State I is induced by excess photosystem I (PSI) light and State 2 is induced by excess photosystem II (PSII) light. In Chlamydomonas reinhardtii (Chlamydomonas smithii), this protein is Chlorophyll a-b binding protein CP29.